The sequence spans 290 residues: 4-diphosphocytidyl-2-C-methyl-D-erythritol kinase (290 aa).

The active site involves K10. Residue 95-105 (PVAAGLAGGSS) participates in ATP binding. D137 is an active-site residue.

The protein belongs to the GHMP kinase family. IspE subfamily.

It carries out the reaction 4-CDP-2-C-methyl-D-erythritol + ATP = 4-CDP-2-C-methyl-D-erythritol 2-phosphate + ADP + H(+). The protein operates within isoprenoid biosynthesis; isopentenyl diphosphate biosynthesis via DXP pathway; isopentenyl diphosphate from 1-deoxy-D-xylulose 5-phosphate: step 3/6. Catalyzes the phosphorylation of the position 2 hydroxy group of 4-diphosphocytidyl-2C-methyl-D-erythritol. In Geobacillus thermodenitrificans (strain NG80-2), this protein is 4-diphosphocytidyl-2-C-methyl-D-erythritol kinase.